Consider the following 541-residue polypeptide: Propionyl-CoA carboxylase beta chain, mitochondrial (541 aa).

The transit peptide at 1–28 (MAAAIRIRAVAAGARLSVLNCGLGITTR) directs the protein to the mitochondrion. Residues 34 to 292 (PVSVKERIDN…SSQDPAPIRE (259 aa)) enclose the CoA carboxyltransferase N-terminal domain. The carboxyltransferase stretch occupies residues 34–535 (PVSVKERIDN…SKKVHRPWRK (502 aa)). At serine 73 the chain carries Phosphoserine. Lysine 101 carries the post-translational modification N6-acetyllysine; alternate. Lysine 101 is subject to N6-succinyllysine; alternate. N6-succinyllysine is present on lysine 250. Positions 296 to 535 (PSDRLVPELD…SKKVHRPWRK (240 aa)) constitute a CoA carboxyltransferase C-terminal domain. The interval 327 to 360 (DEREFFEIMPSYAKNIVVGFARMNGRTVGIVGNQ) is acyl-CoA binding. N6-acetyllysine; alternate is present on residues lysine 476 and lysine 491. N6-succinyllysine; alternate is present on residues lysine 476 and lysine 491.

This sequence belongs to the AccD/PCCB family. In terms of assembly, the holoenzyme is a dodecamer composed of 6 PCCA/alpha subunits and 6 PCCB/beta subunits. As to expression, broadly expressed. Most abundantly expressed in the kidney, liver, small intestine and stomach.

Its subcellular location is the mitochondrion matrix. The enzyme catalyses propanoyl-CoA + hydrogencarbonate + ATP = (S)-methylmalonyl-CoA + ADP + phosphate + H(+). It carries out the reaction butanoyl-CoA + hydrogencarbonate + ATP = (2S)-ethylmalonyl-CoA + ADP + phosphate + H(+). The protein operates within metabolic intermediate metabolism; propanoyl-CoA degradation; succinyl-CoA from propanoyl-CoA: step 1/3. This is one of the 2 subunits of the biotin-dependent propionyl-CoA carboxylase (PCC), a mitochondrial enzyme involved in the catabolism of odd chain fatty acids, branched-chain amino acids isoleucine, threonine, methionine, and valine and other metabolites. Propionyl-CoA carboxylase catalyzes the carboxylation of propionyl-CoA/propanoyl-CoA to D-methylmalonyl-CoA/(S)-methylmalonyl-CoA. Within the holoenzyme, the alpha subunit catalyzes the ATP-dependent carboxylation of the biotin carried by the biotin carboxyl carrier (BCC) domain, while the beta subunit then transfers the carboxyl group from carboxylated biotin to propionyl-CoA. Propionyl-CoA carboxylase also significantly acts on butyryl-CoA/butanoyl-CoA, which is converted to ethylmalonyl-CoA/(2S)-ethylmalonyl-CoA. Other alternative minor substrates include (2E)-butenoyl-CoA/crotonoyl-CoA. The protein is Propionyl-CoA carboxylase beta chain, mitochondrial of Mus musculus (Mouse).